The sequence spans 742 residues: ATP-dependent RNA helicase DBP7 (742 aa).

The segment at 45–100 is disordered; that stretch reads GKTVSRKRKANTTGDEGIIPGRGENSIKKLHKESSYSSEEQEKYKGRNAHNTQGRT. A Q motif motif is present at residues 143 to 172; the sequence is DQFASLGVSSLLVSHLEQKMRIKKPTSIQK. The Helicase ATP-binding domain maps to 178–372; that stretch reads IIGNAGKNDF…NVALKDYKLI (195 aa). Residue 191 to 198 participates in ATP binding; that stretch reads AQTGSGKT. Positions 307–310 match the DEGD box motif; the sequence is DEGD. Positions 405–605 constitute a Helicase C-terminal domain; that stretch reads TLAATLNNIT…ILMPAFKDVN (201 aa). The interval 701-726 is disordered; that stretch reads AMGLQSSKDGNSEKKPTKENSKNKMF. Positions 710–722 are enriched in basic and acidic residues; the sequence is GNSEKKPTKENSK.

It belongs to the DEAD box helicase family. DDX31/DBP7 subfamily.

The protein localises to the nucleus. The protein resides in the nucleolus. The enzyme catalyses ATP + H2O = ADP + phosphate + H(+). ATP-binding RNA helicase involved in the biogenesis of 60S ribosomal subunits and is required for the normal formation of 25S and 5.8S rRNAs. This chain is ATP-dependent RNA helicase DBP7 (DBP7), found in Saccharomyces cerevisiae (strain ATCC 204508 / S288c) (Baker's yeast).